The primary structure comprises 1233 residues: ATP-dependent helicase/nuclease subunit A (1233 aa).

The region spanning Thr3–Arg474 is the UvrD-like helicase ATP-binding domain. Ala24–Thr31 contacts ATP. The 292-residue stretch at Val518 to Gly809 folds into the UvrD-like helicase C-terminal domain. The tract at residues Val533–Glu555 is disordered.

The protein belongs to the helicase family. AddA subfamily. In terms of assembly, heterodimer of AddA and AddB/RexB. Requires Mg(2+) as cofactor.

The catalysed reaction is Couples ATP hydrolysis with the unwinding of duplex DNA by translocating in the 3'-5' direction.. The enzyme catalyses ATP + H2O = ADP + phosphate + H(+). The heterodimer acts as both an ATP-dependent DNA helicase and an ATP-dependent, dual-direction single-stranded exonuclease. Recognizes the chi site generating a DNA molecule suitable for the initiation of homologous recombination. The AddA nuclease domain is required for chi fragment generation; this subunit has the helicase and 3' -&gt; 5' nuclease activities. This chain is ATP-dependent helicase/nuclease subunit A, found in Thermoanaerobacter sp. (strain X514).